Consider the following 97-residue polypeptide: MQVAYHWQVISRLLIALLRVYKLVISPLLGPRCRFAPSCSDYAMTAIGRFGPLRGSWLAARRLGRCHPFHPGGFDPVPDAPASPSPSSSCSCKGPHP.

The segment at 77–97 (VPDAPASPSPSSSCSCKGPHP) is disordered. Low complexity predominate over residues 85–97 (SPSSSCSCKGPHP).

Belongs to the UPF0161 family.

It localises to the cell inner membrane. In terms of biological role, could be involved in insertion of integral membrane proteins into the membrane. The chain is Putative membrane protein insertion efficiency factor from Xanthomonas euvesicatoria pv. vesicatoria (strain 85-10) (Xanthomonas campestris pv. vesicatoria).